The sequence spans 315 residues: Olfactory receptor 51L1 (315 aa).

Topologically, residues 1-27 (MGDWNNSDAVEPIFILRGFPGLEYVHS) are extracellular. Residue N5 is glycosylated (N-linked (GlcNAc...) asparagine). Residues 28-48 (WLSILFCLAYLVAFMGNVTIL) form a helical membrane-spanning segment. Topologically, residues 49–56 (SVIWIESS) are cytoplasmic. The helical transmembrane segment at 57-77 (LHQPMYYFISILAVNDLGMSL) threads the bilayer. Topologically, residues 78-101 (STLPTMLAVLWLDAPEIQASACYA) are extracellular. A disulfide bridge links C99 with C191. The helical transmembrane segment at 102–122 (QLFFIHTFTFLESSVLLAMAF) threads the bilayer. The Cytoplasmic portion of the chain corresponds to 123–141 (DRFVAICHPLHYPTILTNS). Residues 142 to 162 (VIGKIGLACLLRSLGVVLPTP) form a helical membrane-spanning segment. At 163 to 198 (LLLRHYHYCHGNALSHAFCLHQDVLRLSCTDARTNS) the chain is on the extracellular side. A helical transmembrane segment spans residues 199 to 219 (IYGLCVVIATLGVDSIFILLS). Residues 220 to 239 (YVLILNTVLDIASREEQLKA) lie on the Cytoplasmic side of the membrane. A helical transmembrane segment spans residues 240–260 (LNTCVSHICVVLIFFVPVIGV). Residues 261 to 275 (SMVHRFGKHLSPIVH) are Extracellular-facing. The helical transmembrane segment at 276 to 296 (ILMADIYLLLPPVLNPIVYSV) threads the bilayer. The Cytoplasmic segment spans residues 297 to 315 (RTKQIRLGILHKFVLRRRF).

The protein belongs to the G-protein coupled receptor 1 family.

It is found in the cell membrane. In terms of biological role, odorant receptor. In Homo sapiens (Human), this protein is Olfactory receptor 51L1 (OR51L1).